The following is a 684-amino-acid chain: Cyclic nucleotide-gated channel alpha-1 (684 aa).

At M1 to L161 the chain is on the cytoplasmic side. The disordered stretch occupies residues A34–K145. Acidic residues predominate over residues S39–D54. The span at S105–K145 shows a compositional bias: basic and acidic residues. Residues F162 to E183 form a helical membrane-spanning segment. At L184–L193 the chain is on the extracellular side. Residues I194 to G214 traverse the membrane as a helical segment. At Y215–K239 the chain is on the cytoplasmic side. Residues L240–N258 traverse the membrane as a helical segment. Residues Y259–R263 lie on the Extracellular side of the membrane. The chain crosses the membrane as a helical span at residues L264 to T282. The Cytoplasmic segment spans residues R283–I289. Residues P287–M395 are ion conduction pathway. The helical transmembrane segment at F290–I313 threads the bilayer. At S314–R336 the chain is on the extracellular side. The N-linked (GlcNAc...) asparagine glycan is linked to N321. 2 helical membrane passes run L337–V371 and V372–N396. The interval T354–E357 is selectivity filter. Residues A397–A473 form a C-linker region. The Cytoplasmic segment spans residues A397–D684. Positions A477–K597 are cyclic nucleotide-binding domain. Residues G537, S540, R553, and T554 each contribute to the 3',5'-cyclic GMP site. The 3',5'-cyclic AMP site is built by R553 and T554. Residues L615–L669 adopt a coiled-coil conformation.

Belongs to the cyclic nucleotide-gated cation channel (TC 1.A.1.5) family. CNGA1 subfamily. Forms heterotetrameric channels composed of CNGA1 and CNGB1 subunits with 3:1 stoichiometry. May also form cyclic nucleotide-activated homotetrameric channels, that are efficiently activated by saturating cGMP, but poorly activated by saturating cAMP compared to the heterotetramer with CNGB1. The channel binds Ca(2+)-bound CALM1 via CaM1 and CaM2 regions of the CNGB1 subunit; this interaction modulates the affinity of the channel for cNMPs in response to intracellular Ca(2+) levels. As to expression, rod cells in the retina and inner medulla of kidney.

The protein localises to the cell membrane. The catalysed reaction is Ca(2+)(in) = Ca(2+)(out). The enzyme catalyses Na(+)(in) = Na(+)(out). It carries out the reaction K(+)(in) = K(+)(out). It catalyses the reaction NH4(+)(in) = NH4(+)(out). The catalysed reaction is Rb(+)(in) = Rb(+)(out). The enzyme catalyses Li(+)(in) = Li(+)(out). It carries out the reaction Cs(+)(in) = Cs(+)(out). Its function is as follows. Pore-forming subunit of the rod cyclic nucleotide-gated channel. Mediates rod photoresponses at dim light converting transient changes in intracellular cGMP levels into electrical signals. In the dark, cGMP levels are high and keep the channel open enabling a steady inward current carried by Na(+) and Ca(2+) ions that leads to membrane depolarization and neurotransmitter release from synaptic terminals. Upon photon absorption cGMP levels decline leading to channel closure and membrane hyperpolarization that ultimately slows neurotransmitter release and signals the presence of light, the end point of the phototransduction cascade. Conducts cGMP- and cAMP-gated ion currents, with permeability for monovalent and divalent cations. The selectivity for Ca(2+) over Na(+) increases with cGMP concentrations, whereas the selectivity among monovalent ions is independent of the cGMP levels. This Mus musculus (Mouse) protein is Cyclic nucleotide-gated channel alpha-1 (Cnga1).